Reading from the N-terminus, the 933-residue chain is Protein FAM83G (933 aa).

4 disordered regions span residues 339–375 (KSAS…QEQK), 450–716 (TECQ…SSSV), 870–899 (WGPS…FGIP), and 911–933 (TKMG…HKDQ). Residues 452–466 (CQKGSETSQEQTSSK) are compositionally biased toward polar residues. Basic and acidic residues-rich tracts occupy residues 467-480 (VETH…EKSG) and 503-514 (SKVDQGRMEHSP). Composition is skewed to polar residues over residues 515–531 (SKAT…QSMD) and 538–580 (SPSQ…SSVA). Residues 590–609 (KEPVKDTVDELEDTSIKDPP) show a composition bias toward basic and acidic residues. Over residues 651 to 660 (KNAQNANIGS) the composition is skewed to polar residues. Residues 702–716 (SSGSGSLPPSSSSSV) are compositionally biased toward low complexity. A compositionally biased stretch (polar residues) spans 875–886 (AANQPSPLTSNP).

It belongs to the FAM83 family. In terms of assembly, interacts with SMAD1 (via MH2 domain); in a SMAD4-independent manner.

It localises to the cytoplasm. Its subcellular location is the cytosol. The protein resides in the nucleus. Its function is as follows. Substrate for type I BMP receptor kinase involved in regulation of some target genes of the BMP signaling pathway. May also play a role in other signaling pathways. In Xenopus laevis (African clawed frog), this protein is Protein FAM83G (fam83g).